We begin with the raw amino-acid sequence, 310 residues long: MLLRIALILGCWSILSEGAENDIAEREDRKRPIWNMAHMVNAISQIHEFGALGANSIETDVSFDKNAKPEYTFHGIPCDCFRNCMNWEYFNHFLEGLRNATTPGNPKYRDRMILVVFDLKSNGLYYDAQARDAGKNLALSLLQNYWNNGDNGGRAYIVLSVPLLKHYELFQGFRETLKEQGHEELLEKVGYDFSGNDDISDIEEAYRLAGISEHIWQSDGITNCIYRGFDRVIQAVNAREKFEGIIKKVYFWTADKPSTVKLALGESVDGIMTNYPNVVVDVLKIDEYQQRFRFATIDDNPWEKYKPYGK.

Positions M1–G18 are cleaved as a signal peptide. The propeptide occupies A19–R26. The active site involves H38. Mg(2+)-binding residues include E58 and D60. Residue H74 is the Nucleophile of the active site. Intrachain disulfides connect C78-C84 and C80-C224. N-linked (GlcNAc...) asparagine glycosylation is present at N99. D118 is a binding site for Mg(2+).

Belongs to the arthropod phospholipase D family. Class II subfamily. Requires Mg(2+) as cofactor. Expressed by the venom gland.

It localises to the secreted. The enzyme catalyses an N-(acyl)-sphingosylphosphocholine = an N-(acyl)-sphingosyl-1,3-cyclic phosphate + choline. The catalysed reaction is an N-(acyl)-sphingosylphosphoethanolamine = an N-(acyl)-sphingosyl-1,3-cyclic phosphate + ethanolamine. It carries out the reaction a 1-acyl-sn-glycero-3-phosphocholine = a 1-acyl-sn-glycero-2,3-cyclic phosphate + choline. It catalyses the reaction a 1-acyl-sn-glycero-3-phosphoethanolamine = a 1-acyl-sn-glycero-2,3-cyclic phosphate + ethanolamine. In terms of biological role, dermonecrotic toxins cleave the phosphodiester linkage between the phosphate and headgroup of certain phospholipids (sphingolipid and lysolipid substrates), forming an alcohol (often choline) and a cyclic phosphate. This toxin acts on sphingomyelin (SM). It may also act on ceramide phosphoethanolamine (CPE), lysophosphatidylcholine (LPC) and lysophosphatidylethanolamine (LPE), but not on lysophosphatidylserine (LPS), and lysophosphatidylglycerol (LPG). It acts by transphosphatidylation, releasing exclusively cyclic phosphate products as second products. Induces dermonecrosis, hemolysis, increased vascular permeability, edema, inflammatory response, and platelet aggregation. This chain is Dermonecrotic toxin LiSicTox-alphaII2, found in Loxosceles intermedia (Brown spider).